The chain runs to 458 residues: Exodeoxyribonuclease 7 large subunit (458 aa).

It belongs to the XseA family. Heterooligomer composed of large and small subunits.

It localises to the cytoplasm. It carries out the reaction Exonucleolytic cleavage in either 5'- to 3'- or 3'- to 5'-direction to yield nucleoside 5'-phosphates.. In terms of biological role, bidirectionally degrades single-stranded DNA into large acid-insoluble oligonucleotides, which are then degraded further into small acid-soluble oligonucleotides. The polypeptide is Exodeoxyribonuclease 7 large subunit (Serratia proteamaculans (strain 568)).